A 599-amino-acid chain; its full sequence is Elongation factor 4 (599 aa).

The 182-residue stretch at 4–185 folds into the tr-type G domain; it reads KNIRNFSIIA…VIIKKVPSPK (182 aa). Residues 16–21 and 132–135 contribute to the GTP site; these read DHGKST and NKVD.

Belongs to the TRAFAC class translation factor GTPase superfamily. Classic translation factor GTPase family. LepA subfamily.

The protein localises to the cell membrane. The enzyme catalyses GTP + H2O = GDP + phosphate + H(+). Functionally, required for accurate and efficient protein synthesis under certain stress conditions. May act as a fidelity factor of the translation reaction, by catalyzing a one-codon backward translocation of tRNAs on improperly translocated ribosomes. Back-translocation proceeds from a post-translocation (POST) complex to a pre-translocation (PRE) complex, thus giving elongation factor G a second chance to translocate the tRNAs correctly. Binds to ribosomes in a GTP-dependent manner. This is Elongation factor 4 from Mycoplasmoides gallisepticum (strain R(low / passage 15 / clone 2)) (Mycoplasma gallisepticum).